The primary structure comprises 673 residues: RAS guanyl-releasing protein 4 (673 aa).

2 stretches are compositionally biased toward basic residues: residues 1–10 (MNRKDIKRKS) and 20–32 (GRGR…RHKT). Disordered regions lie at residues 1–34 (MNRK…KTCP) and 164–188 (LGDA…PGLG). The N-terminal Ras-GEF domain occupies 49 to 175 (GVLSESSCSE…DASSLLSPGG (127 aa)). Residues 164–173 (LGDASSLLSP) show a composition bias toward low complexity. The region spanning 201–432 (ETEELAQHLT…YELSYAREPR (232 aa)) is the Ras-GEF domain. The EF-hand domain maps to 466 to 501 (HVEQLVESVFKNYDPEGRGSISLEDFERLSGNFPFA). Residues 540 to 590 (LHAFQEVTFRKPTFCHSCSGFLWGVTKQGYRCRDCGLCCHRHCRDQVRVEC) form a Phorbol-ester/DAG-type zinc finger. The disordered stretch occupies residues 592–633 (KRPETKGDPGPPGAPVPATSLPPANCGSEESLSYTLSPDPES).

It belongs to the RASGRP family. Expressed by mast cells and their progenitors (at protein level). Expressed by dendritic cells. As to expression, expressed in neutrophils.

The protein localises to the cytoplasm. The protein resides in the cell membrane. In terms of biological role, functions as a cation- and diacylglycerol (DAG)-regulated nucleotide exchange factor activating Ras through the exchange of bound GDP for GTP. In neutrophils, participates in a phospholipase C-activating N-formyl peptide-activated GPCR (G protein-coupled receptor) signaling pathway by promoting Ras-mediated activation of PIK3CG/PI3Kgamma to promote neutrophil functional responses. In CD117(+) dendritic cells and mast cells, participates in an lipopolysaccharide (LPS)-activated signaling pathway that stimulates the production of interferon-gamma and other pro-inflammatory cytokines by natural killer (NK) cells. May function in mast cell differentiation. Does not appear to be required for the development of B-cells, DC-cells, T-cells, or NK-cells. Its function is as follows. Binds diacylglycerol (DAG). Functionally, unable to bind diacylglycerol (DAG). This chain is RAS guanyl-releasing protein 4 (Rasgrp4), found in Mus musculus (Mouse).